The sequence spans 390 residues: Pyruvate dehydrogenase E1 component subunit alpha, somatic form, mitochondrial (390 aa).

The transit peptide at 1 to 29 (MRKMLAAVSRVLAGAAQKPASRVLVASRN) directs the protein to the mitochondrion. At Lys63 the chain carries N6-acetyllysine; alternate. Lys63 carries the N6-succinyllysine; alternate modification. His92, Tyr118, Arg119, Ala157, Gly165, Val167, Asp196, Gly197, Ala198, Asn225, and Tyr227 together coordinate pyruvate. Residues Tyr118 and Arg119 each contribute to the thiamine diphosphate site. Residues Gly165, Val167, Asp196, Gly197, Ala198, and Asn225 each coordinate thiamine diphosphate. Position 196 (Asp196) interacts with Mg(2+). Mg(2+) contacts are provided by Asn225 and Tyr227. Ser232 is subject to Phosphoserine; by PDK1. Lys244 carries the post-translational modification N6-acetyllysine; alternate. Lys244 is modified (N6-succinyllysine; alternate). Lys267 carries the post-translational modification N6-acetyllysine. Position 277 is an N6-succinyllysine (Lys277). His292 is a thiamine diphosphate binding site. Ser293 carries the post-translational modification Phosphoserine; by PDK1, PDK2, PDK3 and PDK4. A Phosphoserine modification is found at Ser295. Residue Ser300 is modified to Phosphoserine; by PDK1, PDK2, PDK3 and PDK4. At Tyr301 the chain carries Phosphotyrosine. The residue at position 313 (Lys313) is an N6-acetyllysine; alternate. At Lys313 the chain carries N6-succinyllysine; alternate. N6-acetyllysine occurs at positions 321 and 336. Lys385 bears the N6-succinyllysine mark.

Heterotetramer of two PDHA1 and two PDHB subunits. The heterotetramer interacts with DLAT, and is part of the multimeric pyruvate dehydrogenase complex that contains multiple copies of pyruvate dehydrogenase (E1), dihydrolipoamide acetyltransferase (DLAT, E2) and lipoamide dehydrogenase (DLD, E3). These subunits are bound to an inner core composed of about 48 DLAT and 12 PDHX molecules. Thiamine diphosphate is required as a cofactor. Mg(2+) serves as cofactor. In terms of processing, phosphorylation at Ser-232, Ser-293 and Ser-300 by PDK family kinases inactivates the enzyme; for this phosphorylation at a single site is sufficient. Phosphorylation at Ser-293 interferes with access to active site, and thereby inactivates the enzyme. Dephosphorylation at all three sites, i.e. at Ser-232, Ser-293 and Ser-300, is required for reactivation. Acetylation alters the phosphorylation pattern. Deacetylated by SIRT3. As to expression, in all tissues, but in very low amount in testis.

The protein localises to the mitochondrion matrix. The catalysed reaction is N(6)-[(R)-lipoyl]-L-lysyl-[protein] + pyruvate + H(+) = N(6)-[(R)-S(8)-acetyldihydrolipoyl]-L-lysyl-[protein] + CO2. Its activity is regulated as follows. Pyruvate dehydrogenase activity is inhibited by phosphorylation of PDHA1; it is reactivated by dephosphorylation. In terms of biological role, the pyruvate dehydrogenase complex catalyzes the overall conversion of pyruvate to acetyl-CoA and CO(2), and thereby links the glycolytic pathway to the tricarboxylic cycle. The polypeptide is Pyruvate dehydrogenase E1 component subunit alpha, somatic form, mitochondrial (Pdha1) (Rattus norvegicus (Rat)).